The sequence spans 121 residues: MARIAGINIPPQQHSEIGLTAIFGVGRNRARKICDACGIAYSKKVKDLTDLELEKIRDQVAQFTIEGDLRRETTMNIKRLMDIGCYRGFRHRRGLPMRGQRTRTNARTRKGPRKAAQSLKK.

The interval arginine 93–lysine 121 is disordered.

The protein belongs to the universal ribosomal protein uS13 family. Part of the 30S ribosomal subunit. Forms a loose heterodimer with protein S19. Forms two bridges to the 50S subunit in the 70S ribosome.

Its function is as follows. Located at the top of the head of the 30S subunit, it contacts several helices of the 16S rRNA. In the 70S ribosome it contacts the 23S rRNA (bridge B1a) and protein L5 of the 50S subunit (bridge B1b), connecting the 2 subunits; these bridges are implicated in subunit movement. Contacts the tRNAs in the A and P-sites. This Albidiferax ferrireducens (strain ATCC BAA-621 / DSM 15236 / T118) (Rhodoferax ferrireducens) protein is Small ribosomal subunit protein uS13.